Here is a 148-residue protein sequence, read N- to C-terminus: Holo-[acyl-carrier-protein] synthase (148 aa).

Mg(2+) contacts are provided by Asp9 and Glu63.

This sequence belongs to the P-Pant transferase superfamily. AcpS family. Mg(2+) is required as a cofactor.

It localises to the cytoplasm. The catalysed reaction is apo-[ACP] + CoA = holo-[ACP] + adenosine 3',5'-bisphosphate + H(+). Transfers the 4'-phosphopantetheine moiety from coenzyme A to a Ser of acyl-carrier-protein. The chain is Holo-[acyl-carrier-protein] synthase from Burkholderia cenocepacia (strain HI2424).